Reading from the N-terminus, the 915-residue chain is Metabotropic glutamate receptor 7 (915 aa).

The first 34 residues, 1-34 (MVQLGKLLRVLTLMKFPCCVLEVLLCVLAAAARG), serve as a signal peptide directing secretion. The Extracellular portion of the chain corresponds to 35 to 590 (QEMYAPHSIR…IIKLEWHSPW (556 aa)). C67 and C109 are oxidised to a cystine. N98 carries an N-linked (GlcNAc...) asparagine glycan. Residues S159, 180–182 (AST), Y230, and D314 each bind L-glutamate. 7 disulfides stabilise this stretch: C249–C541, C374–C390, C430–C437, C523–C542, C527–C545, C548–C560, and C563–C576. An L-glutamate-binding site is contributed by K407. N458 and N486 each carry an N-linked (GlcNAc...) asparagine glycan. The N-linked (GlcNAc...) asparagine glycan is linked to N572. A helical membrane pass occupies residues 591–615 (AVIPVFLAMLGIIATIFVMATFIRY). At 616–627 (NDTPIVRASGRE) the chain is on the cytoplasmic side. Residues 628–648 (LSYVLLTGIFLCYIITFLMIA) traverse the membrane as a helical segment. Over 649–654 (KPDVAV) the chain is Extracellular. The chain crosses the membrane as a helical span at residues 655-675 (CSFRRVFLGLGMCISYAALLT). Residues 676–702 (KTNRIYRIFEQGKKSVTAPRLISPTSQ) lie on the Cytoplasmic side of the membrane. The chain crosses the membrane as a helical span at residues 703–723 (LAITSSLISVQLLGVFIWFGV). Residues 724–753 (DPPNIIIDYDEHKTMNPEQARGVLKCDITD) are Extracellular-facing. Residues 754–775 (LQIICSLGYSILLMVTCTVYAI) traverse the membrane as a helical segment. Residues 776-788 (KTRGVPENFNEAK) lie on the Cytoplasmic side of the membrane. Residues 789 to 810 (PIGFTMYTTCIVWLAFIPIFFG) form a helical membrane-spanning segment. The Extracellular segment spans residues 811 to 825 (TAQSAEKLYIQTTTL). A helical membrane pass occupies residues 826–850 (TISMNLSASVALGMLYMPKVYIIIF). Residues 851–915 (HPELNVQKRK…KYVSYNNLVI (65 aa)) are Cytoplasmic-facing. The segment at 874–895 (SRLSHKPSDRPNGEAKTELCEN) is disordered. Basic and acidic residues predominate over residues 879–892 (KPSDRPNGEAKTEL). A Phosphoserine modification is found at S900.

The protein belongs to the G-protein coupled receptor 3 family. Homodimer. Interacts with PICK1.

Its subcellular location is the cell membrane. Functionally, G-protein coupled receptor activated by glutamate that regulates axon outgrowth through the MAPK-cAMP-PKA signaling pathway during neuronal development. Ligand binding causes a conformation change that triggers signaling via guanine nucleotide-binding proteins (G proteins) and modulates the activity of downstream effectors, such as adenylate cyclase that it inhibits. This Mus musculus (Mouse) protein is Metabotropic glutamate receptor 7 (Grm7).